The primary structure comprises 731 residues: Alpha-catulin (731 aa).

Phosphoserine is present on residues Ser373 and Ser537. Residues 535 to 559 (HLSLPKPTKNSANLKSLKPDKPDSE) are disordered.

The protein belongs to the vinculin/alpha-catenin family. Interacts with ARHGEF1. Interacts with Dtna. The interaction is required for correct localization of both Ctnnal1 and Dtna.

It localises to the cytoplasm. Its subcellular location is the cytoskeleton. It is found in the cell membrane. In terms of biological role, may modulate the Rho pathway signaling by providing a scaffold for the Lbc Rho guanine nucleotide exchange factor (ARHGEF1). The protein is Alpha-catulin (Ctnnal1) of Mus musculus (Mouse).